Reading from the N-terminus, the 197-residue chain is Protein SYM1 (197 aa).

4 helical membrane passes run 20–40, 55–75, 97–117, and 137–157; these read AIMT…LFPT, AVIY…KILN, VDQL…MSIM, and LLTN…VVPL.

This sequence belongs to the peroxisomal membrane protein PXMP2/4 family.

It localises to the mitochondrion inner membrane. Its function is as follows. May be involved in cellular response to stress. Required to maintain mitochondrial DNA (mtDNA) integrity and stability. Required for ethanol metabolism and tolerance during heat shock. This Saccharomyces cerevisiae (strain ATCC 204508 / S288c) (Baker's yeast) protein is Protein SYM1 (SYM1).